The primary structure comprises 259 residues: Short chain dehydrogenase ausX (259 aa).

The NADP(+) site is built by isoleucine 13, aspartate 59, arginine 121, tyrosine 153, lysine 157, and valine 186. The active-site Proton acceptor is tyrosine 153. The Proton donor role is filled by tyrosine 153. The Lowers pKa of active site Tyr role is filled by lysine 157.

It belongs to the short-chain dehydrogenases/reductases (SDR) family.

It participates in secondary metabolite biosynthesis; terpenoid biosynthesis. In terms of biological role, short chain dehydrogenase; part of the gene cluster A that mediates the biosynthesis of the fungal meroterpenoid acetoxydehydroaustin. The first step of the pathway is the synthesis of 3,5-dimethylorsellinic acid by the polyketide synthase ausA. 3,5-dimethylorsellinic acid is then prenylated by the polyprenyl transferase ausN. Further epoxidation by the FAD-dependent monooxygenase ausM and cyclization by the probable terpene cyclase ausL lead to the formation of protoaustinoid A. Protoaustinoid A is then oxidized to spiro-lactone preaustinoid A3 by the combined action of the FAD-binding monooxygenases ausB and ausC, and the dioxygenase ausE. Acid-catalyzed keto-rearrangement and ring contraction of the tetraketide portion of preaustinoid A3 by ausJ lead to the formation of preaustinoid A4. The aldo-keto reductase ausK, with the help of ausH, is involved in the next step by transforming preaustinoid A4 into isoaustinone which is in turn hydroxylated by the P450 monooxygenase ausI to form austinolide. The cytochrome P450 monooxygenase ausG then modifies austinolide to austinol. Austinol is further acetylated to austin by the O-acetyltransferase ausP, which spontaneously changes to dehydroaustin. The cytochrome P450 monooxygenase then converts dehydroaustin is into 7-dehydrodehydroaustin. The hydroxylation catalyzed by ausR permits the second O-acetyltransferase ausQ to add an additional acetyl group to the molecule, leading to the formation of acetoxydehydroaustin. Due to genetic rearrangements of the clusters and the subsequent loss of some enzymes, the end product of the Penicillium brasilianum austinoid biosynthesis clusters is acetoxydehydroaustin. In Penicillium brasilianum, this protein is Short chain dehydrogenase ausX.